The primary structure comprises 436 residues: Serine--tRNA ligase (436 aa).

242–244 (TAE) is a binding site for L-serine. 273–275 (RSE) is a binding site for ATP. An L-serine-binding site is contributed by Glu-296. Residue 360–363 (EISS) coordinates ATP. Position 395 (Ser-395) interacts with L-serine.

This sequence belongs to the class-II aminoacyl-tRNA synthetase family. Type-1 seryl-tRNA synthetase subfamily. In terms of assembly, homodimer. The tRNA molecule binds across the dimer.

It is found in the cytoplasm. The catalysed reaction is tRNA(Ser) + L-serine + ATP = L-seryl-tRNA(Ser) + AMP + diphosphate + H(+). The enzyme catalyses tRNA(Sec) + L-serine + ATP = L-seryl-tRNA(Sec) + AMP + diphosphate + H(+). It functions in the pathway aminoacyl-tRNA biosynthesis; selenocysteinyl-tRNA(Sec) biosynthesis; L-seryl-tRNA(Sec) from L-serine and tRNA(Sec): step 1/1. Functionally, catalyzes the attachment of serine to tRNA(Ser). Is also able to aminoacylate tRNA(Sec) with serine, to form the misacylated tRNA L-seryl-tRNA(Sec), which will be further converted into selenocysteinyl-tRNA(Sec). The polypeptide is Serine--tRNA ligase (Polynucleobacter asymbioticus (strain DSM 18221 / CIP 109841 / QLW-P1DMWA-1) (Polynucleobacter necessarius subsp. asymbioticus)).